An 805-amino-acid polypeptide reads, in one-letter code: Leucine--tRNA ligase (805 aa).

A 'HIGH' region motif is present at residues 40-51 (PYPSGQGLHVGH). Residues 577-581 (KMSKS) carry the 'KMSKS' region motif. ATP is bound at residue K580.

The protein belongs to the class-I aminoacyl-tRNA synthetase family.

It localises to the cytoplasm. It catalyses the reaction tRNA(Leu) + L-leucine + ATP = L-leucyl-tRNA(Leu) + AMP + diphosphate. In Pediococcus pentosaceus (strain ATCC 25745 / CCUG 21536 / LMG 10740 / 183-1w), this protein is Leucine--tRNA ligase.